Reading from the N-terminus, the 113-residue chain is Cytochrome c (113 aa).

Residues Cys21, Cys24, His25, and Met90 each contribute to the heme c site.

This sequence belongs to the cytochrome c family. Binds 1 heme c group covalently per subunit.

Its subcellular location is the mitochondrion intermembrane space. Functionally, electron carrier protein. The oxidized form of the cytochrome c heme group can accept an electron from the heme group of the cytochrome c1 subunit of cytochrome reductase. Cytochrome c then transfers this electron to the cytochrome oxidase complex, the final protein carrier in the mitochondrial electron-transport chain. This Dictyostelium discoideum (Social amoeba) protein is Cytochrome c (cytC).